The following is a 325-amino-acid chain: Structure-specific endonuclease subunit SLX1 (325 aa).

The GIY-YIG domain maps to 10–92 (ALYTVYILRS…NNPHLSMHIP (83 aa)). An SLX1-type zinc finger spans residues 230–284 (CVVCREEMKSGEGLHAVCTHEGCDGVGHISCWSRSFLKNNDTGSILPVQGQCPMC).

It belongs to the SLX1 family. Forms a heterodimer with SLX4. A divalent metal cation is required as a cofactor.

The protein localises to the nucleus. In terms of biological role, catalytic subunit of the SLX1-SLX4 structure-specific endonuclease that resolves DNA secondary structures generated during DNA repair and recombination. Has endonuclease activity towards branched DNA substrates, introducing single-strand cuts in duplex DNA close to junctions with ss-DNA. In Chaetomium globosum (strain ATCC 6205 / CBS 148.51 / DSM 1962 / NBRC 6347 / NRRL 1970) (Soil fungus), this protein is Structure-specific endonuclease subunit SLX1.